The following is a 524-amino-acid chain: 2-isopropylmalate synthase (524 aa).

Residues valine 15–histidine 275 enclose the Pyruvate carboxyltransferase domain. The Mn(2+) site is built by aspartate 24, histidine 212, histidine 214, and asparagine 248. The segment at arginine 401–phenylalanine 524 is regulatory domain.

It belongs to the alpha-IPM synthase/homocitrate synthase family. LeuA type 1 subfamily. In terms of assembly, homodimer. Mn(2+) serves as cofactor.

It localises to the cytoplasm. It catalyses the reaction 3-methyl-2-oxobutanoate + acetyl-CoA + H2O = (2S)-2-isopropylmalate + CoA + H(+). It functions in the pathway amino-acid biosynthesis; L-leucine biosynthesis; L-leucine from 3-methyl-2-oxobutanoate: step 1/4. Catalyzes the condensation of the acetyl group of acetyl-CoA with 3-methyl-2-oxobutanoate (2-ketoisovalerate) to form 3-carboxy-3-hydroxy-4-methylpentanoate (2-isopropylmalate). The protein is 2-isopropylmalate synthase of Caulobacter vibrioides (strain ATCC 19089 / CIP 103742 / CB 15) (Caulobacter crescentus).